A 126-amino-acid chain; its full sequence is Probable DNA-directed RNA polymerase II subunit RPB11 (126 aa).

The protein belongs to the archaeal Rpo11/eukaryotic RPB11/RPC19 RNA polymerase subunit family. In terms of assembly, component of the RNA polymerase II (Pol II) complex consisting of 12 subunits.

Its subcellular location is the nucleus. In terms of biological role, DNA-dependent RNA polymerase catalyzes the transcription of DNA into RNA using the four ribonucleoside triphosphates as substrates. Component of RNA polymerase II which synthesizes mRNA precursors and many functional non-coding RNAs. Pol II is the central component of the basal RNA polymerase II transcription machinery. It is composed of mobile elements that move relative to each other. RPB11 is part of the core element with the central large cleft. The chain is Probable DNA-directed RNA polymerase II subunit RPB11 from Plasmodium falciparum (isolate 3D7).